Consider the following 260-residue polypeptide: Type III pantothenate kinase (260 aa).

6 to 13 (DSGNTNIV) provides a ligand contact to ATP. A substrate-binding site is contributed by 108-111 (GADR). Asp110 acts as the Proton acceptor in catalysis. Asp130 is a K(+) binding site. Thr133 is an ATP binding site. Thr185 serves as a coordination point for substrate.

This sequence belongs to the type III pantothenate kinase family. In terms of assembly, homodimer. Requires NH4(+) as cofactor. K(+) serves as cofactor.

It is found in the cytoplasm. The enzyme catalyses (R)-pantothenate + ATP = (R)-4'-phosphopantothenate + ADP + H(+). Its pathway is cofactor biosynthesis; coenzyme A biosynthesis; CoA from (R)-pantothenate: step 1/5. Its function is as follows. Catalyzes the phosphorylation of pantothenate (Pan), the first step in CoA biosynthesis. The sequence is that of Type III pantothenate kinase from Paramagnetospirillum magneticum (strain ATCC 700264 / AMB-1) (Magnetospirillum magneticum).